The following is a 131-amino-acid chain: Lymphocyte antigen 6E (131 aa).

The N-terminal stretch at 1–20 is a signal peptide; that stretch reads MKIFLPVLLAALLGVERASS. The region spanning 21–101 is the UPAR/Ly6 domain; that stretch reads LMCFSCLNQK…CCQSFLCNFS (81 aa). Cystine bridges form between Cys-23/Cys-48, Cys-26/Cys-35, Cys-41/Cys-71, Cys-75/Cys-92, and Cys-93/Cys-98. N-linked (GlcNAc...) asparagine glycosylation is present at Asn-99. Ser-101 is lipidated: GPI-anchor amidated serine. The propeptide at 102 to 131 is removed in mature form; the sequence is AADGGLRASVTLLGAGLLLSLLPALLRFGP.

In terms of assembly, interacts with CHRNA4. Widely expressed, predominantly in liver, kidney, ovary, spleen and peripheral blood Leukocytes.

The protein localises to the cell membrane. Its function is as follows. GPI-anchored cell surface protein that regulates T-lymphocytes proliferation, differentiation, and activation. Regulates the T-cell receptor (TCR) signaling by interacting with component CD3Z/CD247 at the plasma membrane, leading to CD3Z/CD247 phosphorylation modulation. Restricts the entry of human coronaviruses, including SARS-CoV, MERS-CoV and SARS-CoV-2, by interfering with spike protein-mediated membrane fusion. Also plays an essential role in placenta formation by acting as the main receptor for syncytin-A (SynA). Therefore, participates in the normal fusion of syncytiotrophoblast layer I (SynT-I) and in the proper morphogenesis of both fetal and maternal vasculatures within the placenta. May also act as a modulator of nicotinic acetylcholine receptors (nAChRs) activity. (Microbial infection) Promotes entry, likely through an enhanced virus-cell fusion process, of various viruses including HIV-1, West Nile virus, dengue virus and Zika virus. In contrast, the paramyxovirus PIV5, which enters at the plasma membrane, does not require LY6E. Mechanistically, adopts a microtubule-like organization upon viral infection and enhances viral uncoating after endosomal escape. The polypeptide is Lymphocyte antigen 6E (Homo sapiens (Human)).